The sequence spans 342 residues: Anthranilate phosphoribosyltransferase (342 aa).

5-phospho-alpha-D-ribose 1-diphosphate contacts are provided by residues Gly-79, 82–83 (GD), Thr-87, 89–92 (NVST), 107–115 (KHGNRAATS), and Ser-119. Gly-79 contributes to the anthranilate binding site. Ser-91 is a binding site for Mg(2+). Asn-110 contacts anthranilate. Arg-165 contributes to the anthranilate binding site. Mg(2+)-binding residues include Asp-224 and Glu-225.

Belongs to the anthranilate phosphoribosyltransferase family. As to quaternary structure, homodimer. Requires Mg(2+) as cofactor.

It carries out the reaction N-(5-phospho-beta-D-ribosyl)anthranilate + diphosphate = 5-phospho-alpha-D-ribose 1-diphosphate + anthranilate. The protein operates within amino-acid biosynthesis; L-tryptophan biosynthesis; L-tryptophan from chorismate: step 2/5. In terms of biological role, catalyzes the transfer of the phosphoribosyl group of 5-phosphorylribose-1-pyrophosphate (PRPP) to anthranilate to yield N-(5'-phosphoribosyl)-anthranilate (PRA). The sequence is that of Anthranilate phosphoribosyltransferase from Rubrobacter xylanophilus (strain DSM 9941 / JCM 11954 / NBRC 16129 / PRD-1).